The chain runs to 418 residues: Thermolabile hemolysin (418 aa).

The signal sequence occupies residues 1–19 (MMKKTITLLTALLPLASAV). The Nucleophile role is filled by Ser153. Catalysis depends on residues Asp390 and His393.

Belongs to the 'GDSL' lipolytic enzyme family. Post-translationally, there are two forms of LDH. The LDH(S) may be a protein in which 13 residues of the N-terminal of LDH(L) are deleted.

It localises to the secreted. Phospholipase hydrolyzing both fatty acid esters of phospholipid, i.e. it hydrolyzes phosphatidylcholine (PC) to lysophosphatidylcholine (LPC) and then LPC to glycerophosphorylcholine (GPC). The sequence is that of Thermolabile hemolysin from Vibrio parahaemolyticus serotype O3:K6 (strain RIMD 2210633).